The chain runs to 551 residues: HTH-type transcriptional regulator SgrR (551 aa).

The HTH marR-type domain maps to 1–116; it reads MPSARLQQQF…LVSHLGRSFR (116 aa). A DNA-binding region (H-T-H motif) is located at residues 26–49; the sequence is LNELAALLSCSRRHMRTLLNTMQD. Residues 163-492 form a solute-binding region; the sequence is ELEADIAHHW…IDWQADAARW (330 aa).

Functionally, activates the small RNA gene sgrS under glucose-phosphate stress conditions as well as yfdZ. Represses its own transcription under both stress and non-stress conditions. Might act as a sensor of the intracellular accumulation of phosphoglucose by binding these molecules in its C-terminal solute-binding domain. In Escherichia coli O6:K15:H31 (strain 536 / UPEC), this protein is HTH-type transcriptional regulator SgrR.